The following is a 258-amino-acid chain: MLTAEKLCVERQGHRILSDVSVEISPGQVVAVLGANGAGKSTLLQCLSGDVSEAKQHVFLNGKNLDSYTSQALAMARAVMPQSVQMDFAFLVSELVEMGLWQIPRQSDKQQRVDEALALFGIETLKQRDYQTLSGGEQQRVQLARVVAQLLTPIAQADAPRYLLLDECTANLDFAHQHQVFEVVKKLANTYQMGVVVVLHDMNLAAQYADHLVLLKQGKVLDQGSVESMLIPSKIEELYDFPVQVLPHPKGWPMIVPA.

The ABC transporter domain maps to 2 to 242; the sequence is LTAEKLCVER…SKIEELYDFP (241 aa). 34-41 is an ATP binding site; it reads GANGAGKS.

It belongs to the ABC transporter superfamily. Heme (hemin) importer (TC 3.A.1.14.5) family. In terms of assembly, the complex is composed of two ATP-binding proteins (HmuV), two transmembrane proteins (HmuU) and a solute-binding protein (HmuT).

The protein localises to the cell inner membrane. In terms of biological role, part of the ABC transporter complex HmuTUV involved in hemin import. Responsible for energy coupling to the transport system. The chain is Hemin import ATP-binding protein HmuV from Hydrogenovibrio crunogenus (strain DSM 25203 / XCL-2) (Thiomicrospira crunogena).